A 149-amino-acid chain; its full sequence is MVFLTAQLWLRNRVTDRYFRIQEVLKHARHFRGRKNRCYRLAVRTVIRAFVKCTKARYLKKKNMRTLWINRITAASQEHGLKYPALIGNLVKCQVELNRKVLADLAIYEPKTFKSLAALASRRRHEGFAAALGDGKEPEGIFSRVVQYH.

The transit peptide at 1–9 (MVFLTAQLW) directs the protein to the mitochondrion.

It belongs to the bacterial ribosomal protein bL20 family. In terms of assembly, component of the mitochondrial large ribosomal subunit (mt-LSU). Mature mammalian 55S mitochondrial ribosomes consist of a small (28S) and a large (39S) subunit. The 28S small subunit contains a 12S ribosomal RNA (12S mt-rRNA) and 30 different proteins. The 39S large subunit contains a 16S rRNA (16S mt-rRNA), a copy of mitochondrial valine transfer RNA (mt-tRNA(Val)), which plays an integral structural role, and 52 different proteins. Interacts with OXA1L.

It is found in the mitochondrion. The chain is Large ribosomal subunit protein bL20m (MRPL20) from Homo sapiens (Human).